Reading from the N-terminus, the 967-residue chain is Disks large homolog 1 (967 aa).

The region spanning 5-65 (SSEKAHKAIE…LYEQTLLSER (61 aa)) is the L27 domain. In terms of domain architecture, PDZ 1 spans 202 to 289 (NIVLEKGHTG…VVSLSLKRRK (88 aa)). Positions 324 to 351 (IHSPSAPIHPPPPPPVHHGSLSQLSVGQ) are disordered. Residues 330–339 (PIHPPPPPPV) are compositionally biased toward pro residues. PDZ domains are found at residues 361–448 (VIDL…QQGT) and 510–591 (PVQL…QYRP). Residues 619–690 (RKSEYVRALF…PSKKRVEKRE (72 aa)) form the SH3 domain. Residues 673–723 (EETAEGVIPSKKRVEKRERLRRKQVNFNSGSQSLGRNSSTTGLENRRGSRS) form a disordered region. A compositionally biased stretch (basic residues) spans 682–696 (SKKRVEKRERLRRKQ). Residues 697 to 715 (VNFNSGSQSLGRNSSTTGL) show a composition bias toward polar residues. The Guanylate kinase-like domain maps to 769 to 955 (VRPVIILGAL…VLSKVYSIIS (187 aa)).

The protein belongs to the MAGUK family. Homooligomerizes; requires L27 domain. Interacts (via L27 domain) with ajm-1; the interaction regulates ajm-1 apical junction location. In terms of tissue distribution, expressed in the apical junctions in the hypodermis. Expressed in epithelial cells in the reproductive system including vulva, uterus and spermatheca.

The protein localises to the membrane. It is found in the apical cell membrane. Its subcellular location is the cell junction. It localises to the adherens junction. The protein resides in the lateral cell membrane. The protein localises to the cytoplasm. In terms of biological role, essential multidomain scaffolding protein required for normal development. Recruits channels, receptors and signaling molecules to discrete plasma membrane domains in polarized cells. Required for proper embryonic elongation. Acts upstream of ajm-1 and becomes localized to apical junctions independently of ajm-1. With let-413, cooperatively regulates ajm-1 localization to apical junctions and the establishment of newly formed epithelia. Plays a role in assembling the adherens junction by clustering ajm-1 and other proteins, to form electron-dense structures; may form a compartment distinct to that of hmp-1 and associated proteins. Plays a role in the directed outgrowth of seam cells, towards neighboring seam cells, during larval development. The chain is Disks large homolog 1 from Caenorhabditis elegans.